We begin with the raw amino-acid sequence, 331 residues long: Cilia- and flagella-associated protein 119 (331 aa).

Ser-34 carries the phosphoserine modification. 2 disordered regions span residues 236–271 (LWPE…PEPE) and 309–331 (SSKL…SKTK). A coiled-coil region spans residues 286–317 (VNKELEQLQGLVEERLKASEERLSSKLTALER).

The protein resides in the cell projection. The protein localises to the cilium. It localises to the flagellum. Its subcellular location is the cytoplasmic vesicle. It is found in the secretory vesicle. The protein resides in the acrosome. The protein localises to the cytoplasm. The polypeptide is Cilia- and flagella-associated protein 119 (Homo sapiens (Human)).